The chain runs to 62 residues: DNA gyrase inhibitor YacG (62 aa).

Residues Cys-8, Cys-11, Cys-27, and Cys-31 each contribute to the Zn(2+) site.

It belongs to the DNA gyrase inhibitor YacG family. In terms of assembly, interacts with GyrB. Zn(2+) serves as cofactor.

Inhibits all the catalytic activities of DNA gyrase by preventing its interaction with DNA. Acts by binding directly to the C-terminal domain of GyrB, which probably disrupts DNA binding by the gyrase. The protein is DNA gyrase inhibitor YacG of Actinobacillus pleuropneumoniae serotype 5b (strain L20).